The primary structure comprises 121 residues: Putative RNase MJ0127 (121 aa).

Active-site residues include R76 and H81. An RX(4)HXY motif motif is present at residues 76–83; sequence RDKLIHHY. The residue at position 83 (Y83) is an O-di-AMP-tyrosine.

This sequence belongs to the HepT RNase toxin family. In terms of assembly, homodimer, probably forms a complex with cognate antitoxin MJ0128. Post-translationally, modified by cognate antitoxin MJ0128; probably at least 2 successive AMPylation events occur on Tyr-83.

Probable toxic component of a putative type VII toxin-antitoxin (TA) system, probably an RNase. Probably neutralized by cognate antitoxin MJ0128. Neutralization may be due to AMPylation by MJ0128. The sequence is that of Putative RNase MJ0127 from Methanocaldococcus jannaschii (strain ATCC 43067 / DSM 2661 / JAL-1 / JCM 10045 / NBRC 100440) (Methanococcus jannaschii).